Consider the following 653-residue polypeptide: UvrABC system protein B (653 aa).

Residues 25–182 (EGIERGVREQ…EKLVELQYKS (158 aa)) form the Helicase ATP-binding domain. 38–45 (GVTGSGKT) serves as a coordination point for ATP. Residues 91–114 (YYDYYQPEAYIPHSDVYIEKDALI) carry the Beta-hairpin motif. The Helicase C-terminal domain occupies 429-591 (QIADVVNESQ…ITPKSISKSV (163 aa)). Residues 616-651 (EEDIIKLQKEMLLHAENLEFEKALEIRNQINKLSQH) enclose the UVR domain.

The protein belongs to the UvrB family. As to quaternary structure, forms a heterotetramer with UvrA during the search for lesions. Interacts with UvrC in an incision complex.

Its subcellular location is the cytoplasm. Its function is as follows. The UvrABC repair system catalyzes the recognition and processing of DNA lesions. A damage recognition complex composed of 2 UvrA and 2 UvrB subunits scans DNA for abnormalities. Upon binding of the UvrA(2)B(2) complex to a putative damaged site, the DNA wraps around one UvrB monomer. DNA wrap is dependent on ATP binding by UvrB and probably causes local melting of the DNA helix, facilitating insertion of UvrB beta-hairpin between the DNA strands. Then UvrB probes one DNA strand for the presence of a lesion. If a lesion is found the UvrA subunits dissociate and the UvrB-DNA preincision complex is formed. This complex is subsequently bound by UvrC and the second UvrB is released. If no lesion is found, the DNA wraps around the other UvrB subunit that will check the other stand for damage. In Anaplasma phagocytophilum (strain HZ), this protein is UvrABC system protein B.